The sequence spans 47 residues: Defensin Tk-AMP-D1.1 (47 aa).

Disulfide bonds link Cys3-Cys47, Cys14-Cys34, Cys20-Cys41, and Cys24-Cys43.

In terms of biological role, plant defense peptide. The chain is Defensin Tk-AMP-D1.1 from Triticum kiharae (Wheat).